The following is a 715-amino-acid chain: Staphylocoagulase (715 aa).

The first 26 residues, 1-26, serve as a signal peptide directing secretion; that stretch reads MKKQIISLGALAVASSLFTWDNKADA. The span at 306 to 327 shows a compositional bias: basic and acidic residues; sequence KYGESETKSPVVKEENKVEDPQ. Disordered stretches follow at residues 306–348 and 430–470; these read KYGE…EETT and QGTE…FNKT. Polar residues predominate over residues 431 to 443; it reads GTESTLKGIQGES. 8 tandem repeats follow at residues 495 to 521, 522 to 548, 549 to 575, 576 to 602, 603 to 629, 630 to 656, 657 to 683, and 684 to 710. The tract at residues 495 to 710 is 8 X 27 AA tandem repeats of A-R-P-[RT]-[FQY]-[NK]-K-[PA]-S-[EK]-T-N-A-Y-N-V-T-T-[NH]-[QAG]-[DN]-G-[TQ]-[VA]-[ST]-Y-G; that stretch reads ARPRFNKPSE…THADGTATYG (216 aa). The disordered stretch occupies residues 674-697; it reads THGNGQVSYGARPTYNKPSKTNAY.

It belongs to the staphylocoagulase family.

In terms of biological role, staphylocoagulase is an extracellular protein which specifically forms a complex with human prothrombin. This complex named staphylothrombin can clot fibrinogen without any proteolytic cleavage of prothrombin. The polypeptide is Staphylocoagulase (Staphylococcus aureus).